Consider the following 499-residue polypeptide: Pleckstrin homology domain-containing family O member 2 (499 aa).

Over residues 1–11 (MEEEGVKEGGQ) the composition is skewed to basic and acidic residues. Residues 1–21 (MEEEGVKEGGQRPRSAQTADK) are disordered. A PH domain is found at 18–119 (TADKAGWIKK…WIKALNEGIN (102 aa)). Ser167 is subject to Phosphoserine. Residues 170 to 419 (LSRLDLDVPD…RRRQPGEQLH (250 aa)) form a disordered region. Residues 201–212 (RPPMPPAKPSPA) are compositionally biased toward pro residues. The segment covering 229 to 238 (SAPAPVPASS) has biased composition (low complexity). Phosphoserine occurs at positions 237 and 238. Positions 246–258 (EDLETPVVEDSDS) are enriched in acidic residues. Ser273 is modified (phosphoserine). Thr298 and Thr311 each carry phosphothreonine. Composition is skewed to low complexity over residues 329–349 (EASG…GPAE) and 367–386 (AAGP…TLPP). A Phosphoserine modification is found at Ser399. Residues 416 to 492 (EQLHRAQLEV…LREKRRELVT (77 aa)) are a coiled coil.

This Bos taurus (Bovine) protein is Pleckstrin homology domain-containing family O member 2 (PLEKHO2).